A 474-amino-acid polypeptide reads, in one-letter code: Aspartyl/glutamyl-tRNA(Asn/Gln) amidotransferase subunit B (474 aa).

It belongs to the GatB/GatE family. GatB subfamily. As to quaternary structure, heterotrimer of A, B and C subunits.

It carries out the reaction L-glutamyl-tRNA(Gln) + L-glutamine + ATP + H2O = L-glutaminyl-tRNA(Gln) + L-glutamate + ADP + phosphate + H(+). The enzyme catalyses L-aspartyl-tRNA(Asn) + L-glutamine + ATP + H2O = L-asparaginyl-tRNA(Asn) + L-glutamate + ADP + phosphate + 2 H(+). Allows the formation of correctly charged Asn-tRNA(Asn) or Gln-tRNA(Gln) through the transamidation of misacylated Asp-tRNA(Asn) or Glu-tRNA(Gln) in organisms which lack either or both of asparaginyl-tRNA or glutaminyl-tRNA synthetases. The reaction takes place in the presence of glutamine and ATP through an activated phospho-Asp-tRNA(Asn) or phospho-Glu-tRNA(Gln). In Persephonella marina (strain DSM 14350 / EX-H1), this protein is Aspartyl/glutamyl-tRNA(Asn/Gln) amidotransferase subunit B.